Consider the following 455-residue polypeptide: Adhesin YadA (455 aa).

Positions 1–25 (MTKDFKISVSAALISALFSSPYAFA) are cleaved as a signal peptide. Residues 26–363 (DDYDGIPNLT…KKAIRESNQY (338 aa)) are surface exposed passenger domain. Residues 209–243 (VNVAQLKKEIEKTQENTNKRSAELLANANAYADNK) adopt a coiled-coil conformation. Residues 364 to 402 (TDHKFRQLDNRLDKLDTRVDKGLASSAALNSLFQPYGVG) form an outer membrane translocation of the passenger domain region. The next 4 beta stranded transmembrane spans lie at 402–412 (GKVNFTAGVGG), 416–427 (SQALAIGSGYRV), 434–440 (KAGVAYA), and 444–455 (DVMYNASFNIEW). A translocator domain region spans residues 403–455 (KVNFTAGVGGYRSSQALAIGSGYRVNENVALKAGVAYAGSSDVMYNASFNIEW).

Belongs to the autotransporter-2 (AT-2) (TC 1.B.40) family. In terms of assembly, homotrimer; in gels migrates as monomers, dimers and homotrimers. Does not form trimers with distantly related EibA from E.coli; coexpression was lethal and one of the genes is eliminated in vivo. If the full translocator domain (368-455) is exchanged with that of EibA ('299-392'), will form heterotrimers with EibA and vice-versa.

It localises to the cell surface. Its subcellular location is the cell outer membrane. In terms of biological role, collagen-binding outer membrane protein forming a fibrillar matrix on the bacterial cell surface. Promotes initial attachment and invasion of eukaryotic cells. Also protects the bacteria by being responsible for agglutination, serum resistance, complement inactivation and phagocytosis resistance. This Yersinia enterocolitica protein is Adhesin YadA (yadA).